The primary structure comprises 301 residues: Mitochondrial carnitine/acylcarnitine carrier protein (301 aa).

A2 is modified (N-acetylalanine). Residues 2-12 lie on the Cytoplasmic side of the membrane; it reads ADQPKPISPLK. 3 Solcar repeats span residues 8-99, 108-196, and 207-293; these read ISPL…GKKL, LSYP…LKNI, and LSAP…AMKF. Residues 13–31 traverse the membrane as a helical segment; it reads NLLAGGFGGVCLVFVGHPL. The Mitochondrial matrix segment spans residues 32 to 73; it reads DTVKVRLQTQPPSLPGQPPMYSGTFDCFRKTLFREGITGLYR. A helical membrane pass occupies residues 74 to 93; it reads GMAAPIIGVTPMFAVCFFGF. At 94–112 the chain is on the cytoplasmic side; sequence GLGKKLQQKHPEDVLSYPQ. Residues 113-131 form a helical membrane-spanning segment; that stretch reads LFAAGMLSGVFTTGIMTPG. Over 132-170 the chain is Mitochondrial matrix; the sequence is ERIKCLLQIQASSGESKYTGTLDCAKKLYQEFGIRGIYK. K148 and K157 each carry N6-acetyllysine. Residue K170 is modified to N6-acetyllysine; alternate. K170 is subject to N6-succinyllysine; alternate. Residues 171–190 form a helical membrane-spanning segment; the sequence is GTVLTLMRDVPASGMYFMTY. Residues 191–211 are Cytoplasmic-facing; the sequence is EWLKNIFTPEGKRVSELSAPR. The chain crosses the membrane as a helical span at residues 212-230; the sequence is ILVAGGIAGIFNWAVAIPP. Residues 231–267 are Mitochondrial matrix-facing; that stretch reads DVLKSRFQTAPPGKYPNGFRDVLRELIRDEGVTSLYK. The chain crosses the membrane as a helical span at residues 268-287; it reads GFNAVMIRAFPANAACFLGF. Over 288 to 301 the chain is Cytoplasmic; that stretch reads EVAMKFLNWATPNL.

Belongs to the mitochondrial carrier (TC 2.A.29) family.

It is found in the mitochondrion inner membrane. It carries out the reaction O-acetyl-(R)-carnitine(in) + (R)-carnitine(out) = O-acetyl-(R)-carnitine(out) + (R)-carnitine(in). The enzyme catalyses an O-acyl-(R)-carnitine(in) + (R)-carnitine(out) = an O-acyl-(R)-carnitine(out) + (R)-carnitine(in). It catalyses the reaction O-propanoyl-(R)-carnitine(in) + (R)-carnitine(out) = O-propanoyl-(R)-carnitine(out) + (R)-carnitine(in). The catalysed reaction is O-hexadecanoyl-(R)-carnitine(in) + (R)-carnitine(out) = O-hexadecanoyl-(R)-carnitine(out) + (R)-carnitine(in). It carries out the reaction O-octanoyl-(R)-carnitine(in) + (R)-carnitine(out) = O-octanoyl-(R)-carnitine(out) + (R)-carnitine(in). The enzyme catalyses (R)-carnitine(in) = (R)-carnitine(out). Mediates the electroneutral exchange of acylcarnitines (O-acyl-(R)-carnitine or L-acylcarnitine) of different acyl chain lengths (ranging from O-acetyl-(R)-carnitine to long-chain O-acyl-(R)-carnitines) with free carnitine ((R)-carnitine or L-carnitine) across the mitochondrial inner membrane, via a ping-pong mechanism. Key player in the mitochondrial oxidation pathway, it translocates the fatty acids in the form of acylcarnitines into the mitochondrial matrix, where the carnitine palmitoyltransferase 2 (CPT-2) activates them to undergo fatty acid beta-oxidation. Catalyzes the unidirectional transport (uniport) of carnitine at lower rates than the antiport (exchange). The sequence is that of Mitochondrial carnitine/acylcarnitine carrier protein from Homo sapiens (Human).